A 268-amino-acid chain; its full sequence is Mesoderm posterior protein 1 (268 aa).

The interval 17-93 (AAWGPTRRPP…RQSASEREKL (77 aa)) is disordered. The segment covering 36–48 (LVSSPDSWGSTPA) has biased composition (polar residues). Positions 66–86 (APSVGRRGARSSRLGSGQRQS) are enriched in low complexity. The region spanning 82 to 136 (GQRQSASEREKLRMRTLARALHELRRFLPPSVAPAGQSLTKIETLRLAIRYIGHL) is the bHLH domain. The short motif at 163–167 (CPLCP) is the CPLCP element. Repeat copies occupy residues 182–183 (GQ) and 184–185 (GQ). The tract at residues 182-185 (GQGQ) is 2 X 2 AA tandem repeats of G-Q.

The protein resides in the nucleus. In terms of biological role, transcription factor. Plays a role in the epithelialization of somitic mesoderm and in the development of cardiac mesoderm. Defines the rostrocaudal patterning of the somites by participating in distinct Notch pathways. In Homo sapiens (Human), this protein is Mesoderm posterior protein 1 (MESP1).